The primary structure comprises 456 residues: Pantothenate kinase 2, mitochondrial (456 aa).

Residues 16 to 89 (AGRFGAPMER…TSAGRPRAEG (74 aa)) form a disordered region. 2 stretches are compositionally biased toward low complexity: residues 28 to 39 (RAAATSAAVGES) and 55 to 65 (SSAAPSGSGEA). S55, S56, and S75 each carry phosphoserine. Positions 154–161 (LELKDLTL) match the Nuclear export signal motif. E224 acts as the Proton acceptor in catalysis. 3 residues coordinate acetyl-CoA: S278, S281, and R293.

It belongs to the type II pantothenate kinase family. In terms of assembly, homodimer.

It localises to the cytoplasm. The protein resides in the cytosol. The enzyme catalyses (R)-pantothenate + ATP = (R)-4'-phosphopantothenate + ADP + H(+). It participates in cofactor biosynthesis; coenzyme A biosynthesis; CoA from (R)-pantothenate: step 1/5. With respect to regulation, inhibited by acetyl-CoA. Inhibited by calcium hopantenate. Activated by palmitoylcarnitine. Catalyzes the phosphorylation of pantothenate to generate 4'-phosphopantothenate in the first and rate-determining step of coenzyme A (CoA) synthesis. This Mus musculus (Mouse) protein is Pantothenate kinase 2, mitochondrial (Pank2).